The chain runs to 304 residues: Murein tetrapeptide carboxypeptidase (304 aa).

Ser106 serves as the catalytic Nucleophile. Active-site charge relay system residues include Glu200 and His270.

This sequence belongs to the peptidase S66 family.

It is found in the cytoplasm. It carries out the reaction N-acetyl-D-glucosaminyl-N-acetylmuramoyl-L-alanyl-meso-2,6-diaminoheptanedioyl-D-alanine + H2O = N-acetyl-D-glucosaminyl-N-acetylmuramoyl-L-alanyl-meso-2,6-diaminoheptanedioate + D-alanine. The protein operates within cell wall biogenesis; peptidoglycan recycling. In terms of biological role, releases the terminal D-alanine residue from the cytoplasmic tetrapeptide recycling product L-Ala-gamma-D-Glu-meso-Dap-D-Ala. Can also cleave D-Ala from murein derivatives containing the tetrapeptide, i.e. MurNAc-tetrapeptide, UDP-MurNAc-tetrapeptide, GlcNAc-MurNAc-tetrapeptide, and GlcNAc-anhMurNAc-tetrapeptide. Does not act on murein sacculi or cross-linked muropeptides. The tripeptides produced by the LcdA reaction can then be reused as peptidoglycan building blocks; LcdA is thereby involved in murein recycling. The protein is Murein tetrapeptide carboxypeptidase (ldcA) of Escherichia coli O157:H7.